The following is a 230-amino-acid chain: Urease accessory protein UreF (230 aa).

This sequence belongs to the UreF family. In terms of assembly, ureD, UreF and UreG form a complex that acts as a GTP-hydrolysis-dependent molecular chaperone, activating the urease apoprotein by helping to assemble the nickel containing metallocenter of UreC. The UreE protein probably delivers the nickel.

Its subcellular location is the cytoplasm. Functionally, required for maturation of urease via the functional incorporation of the urease nickel metallocenter. This Chromohalobacter salexigens (strain ATCC BAA-138 / DSM 3043 / CIP 106854 / NCIMB 13768 / 1H11) protein is Urease accessory protein UreF.